Reading from the N-terminus, the 125-residue chain is Alpha-endosulfine (125 aa).

Residues 1-37 (MSDKYIGDSHLEETGEEKQDSQEKEAVTPEKAEEQKL) show a composition bias toward basic and acidic residues. The tract at residues 1–53 (MSDKYIGDSHLEETGEEKQDSQEKEAVTPEKAEEQKLKAKYPNLGQKPGGSDF) is disordered. Threonine 28 bears the Phosphothreonine; by CDK2 mark. The residue at position 67 (serine 67) is a Phosphoserine; by GWL. Residues 81-108 (QLPCAGPDKNLVTGDHIPTPQDLPQRKS) are disordered. At threonine 99 the chain carries Phosphothreonine; by CDK2. Residue serine 109 is modified to Phosphoserine; by PKA.

The protein belongs to the endosulfine family. Phosphorylation at Ser-67 by gwl during mitosis is essential for interaction with ppp2r2d (PR55-delta) and subsequent inactivation of PP2A.

It localises to the cytoplasm. Its function is as follows. Protein phosphatase inhibitor that specifically inhibits protein phosphatase 2A (PP2A) during mitosis. When phosphorylated at Ser-67 during mitosis, specifically interacts with ppp2r2d (PR55-delta) and inhibits its activity, leading to inactivation of PP2A, an essential condition to keep cyclin-B1-CDK1 activity high during M phase. The polypeptide is Alpha-endosulfine (ensa) (Xenopus tropicalis (Western clawed frog)).